The sequence spans 250 residues: MEKLEKLYEGKAKQLYATDDPEVLWVEYKNSATAGDGEKKEDFAGKGRLNNLITTLIFDLLKKRGIDSHLVARVGETSQLVKKVTMFPLEIVLRNTAAGHFCSRLGVEEGIELKEPVLEYFLKNDELHDPFVNDDDLVALDVCTREDLAEIAPLARRINEALIEIFAKIDVKLVDFKIEMGRTSDGTLLLADEITPDSCRLWDQRDHSGKVEHLDKDLFRRDLGDIIPAYEEIESRLAELAKSEGIEVAE.

Belongs to the SAICAR synthetase family.

The enzyme catalyses 5-amino-1-(5-phospho-D-ribosyl)imidazole-4-carboxylate + L-aspartate + ATP = (2S)-2-[5-amino-1-(5-phospho-beta-D-ribosyl)imidazole-4-carboxamido]succinate + ADP + phosphate + 2 H(+). It functions in the pathway purine metabolism; IMP biosynthesis via de novo pathway; 5-amino-1-(5-phospho-D-ribosyl)imidazole-4-carboxamide from 5-amino-1-(5-phospho-D-ribosyl)imidazole-4-carboxylate: step 1/2. This chain is Phosphoribosylaminoimidazole-succinocarboxamide synthase, found in Bifidobacterium adolescentis (strain ATCC 15703 / DSM 20083 / NCTC 11814 / E194a).